A 212-amino-acid chain; its full sequence is MRLKSSRLGYLFLQFMTLCFYTQMTMQSISMPNFKHHVTEQSRLSDRMSRRLTRTYQLYSRTSGKHVQVLGNKRVNANAEDGDIHAKLVVETDTFGSRVRIRGAKTGYYICMNKKGKLIGRRKGRGKDCIFTEIVLENNYTALQNAKYKGWYMAFTRKGRPRKAMQTRQHQREAHFMKRLPRGHLLTEQKPFDLIPYPLNKRTKHHQRASVN.

The N-terminal stretch at 1–27 (MRLKSSRLGYLFLQFMTLCFYTQMTMQ) is a signal peptide. The N-linked (GlcNAc...) asparagine glycan is linked to N139.

Belongs to the heparin-binding growth factors family.

The protein resides in the secreted. May act as signaling molecule during development of the midbrain-hindbrain boundary (MHB) organizer, and be involved in patterning of the nervous system. In Danio rerio (Zebrafish), this protein is Fibroblast growth factor 8b (fgf8b).